The following is a 113-amino-acid chain: Putative membrane protein insertion efficiency factor (113 aa).

Belongs to the UPF0161 family.

The protein localises to the cell inner membrane. Functionally, could be involved in insertion of integral membrane proteins into the membrane. In Campylobacter jejuni subsp. doylei (strain ATCC BAA-1458 / RM4099 / 269.97), this protein is Putative membrane protein insertion efficiency factor.